A 77-amino-acid polypeptide reads, in one-letter code: U8-lycotoxin-Ls1r (77 aa).

A signal peptide spans 1-20; the sequence is MKLIIFTGLVLFAIVSLIEA. A propeptide spanning residues 21–26 is cleaved from the precursor; that stretch reads QAENEK.

This sequence belongs to the neurotoxin 19 (CSTX) family. 08 (U8-Lctx) subfamily. Contains 4 disulfide bonds. Expressed by the venom gland.

The protein localises to the secreted. This is U8-lycotoxin-Ls1r from Lycosa singoriensis (Wolf spider).